Reading from the N-terminus, the 121-residue chain is Large ribosomal subunit protein bL12 (121 aa).

Belongs to the bacterial ribosomal protein bL12 family. As to quaternary structure, homodimer. Part of the ribosomal stalk of the 50S ribosomal subunit. Forms a multimeric L10(L12)X complex, where L10 forms an elongated spine to which 2 to 4 L12 dimers bind in a sequential fashion. Binds GTP-bound translation factors.

Forms part of the ribosomal stalk which helps the ribosome interact with GTP-bound translation factors. Is thus essential for accurate translation. The chain is Large ribosomal subunit protein bL12 from Salmonella agona (strain SL483).